The chain runs to 138 residues: Cysteine desulfuration protein SufE (138 aa).

Catalysis depends on C51, which acts as the Cysteine persulfide intermediate.

Belongs to the SufE family. Homodimer. Interacts with SufS.

The protein resides in the cytoplasm. It participates in cofactor biosynthesis; iron-sulfur cluster biosynthesis. Functionally, participates in cysteine desulfuration mediated by SufS. Cysteine desulfuration mobilizes sulfur from L-cysteine to yield L-alanine and constitutes an essential step in sulfur metabolism for biosynthesis of a variety of sulfur-containing biomolecules. Functions as a sulfur acceptor for SufS, by mediating the direct transfer of the sulfur atom from the S-sulfanylcysteine of SufS, an intermediate product of cysteine desulfuration process. The chain is Cysteine desulfuration protein SufE from Escherichia coli O81 (strain ED1a).